The sequence spans 209 residues: T-cell surface glycoprotein CD8 beta chain (209 aa).

The first 21 residues, 1 to 21, serve as a signal peptide directing secretion; that stretch reads MRPRMWLLLSAQLAALHGNSV. The region spanning 22 to 131 is the Ig-like V-type domain; the sequence is LQQTPAYIMV…TLIFGTGTQL (110 aa). Residues 22–169 are Extracellular-facing; sequence LQQTPAYIMV…ETRKGPLCSP (148 aa). A disulfide bridge connects residues Cys41 and Cys115. Asn101 is a glycosylation site (N-linked (GlcNAc...) asparagine). The helical transmembrane segment at 170–190 threads the bilayer; that stretch reads ITLSLLVAGILVLLVSLGVAI. At 191–209 the chain is on the cytoplasmic side; the sequence is HLYCRQRRARLRFMKQFYK.

Forms disulfide-linked heterodimers with CD8A at the cell surface. Interacts with CD3D; this interaction couples TCR-CD3 with CD8. Interacts with LCK. In terms of processing, phosphorylated as a consequence of T-cell activation. Post-translationally, palmitoylated at the cytoplasmic tail and thereby targets the heterodimer CD8A/CD8B to lipid rafts unlike CD8A homodimers.

The protein resides in the cell membrane. Functionally, integral membrane glycoprotein that plays an essential role in the immune response and serves multiple functions in responses against both external and internal offenses. In T-cells, functions primarily as a coreceptor for MHC class I molecule:peptide complex. The antigens presented by class I peptides are derived from cytosolic proteins while class II derived from extracellular proteins. Interacts simultaneously with the T-cell receptor (TCR) and the MHC class I proteins presented by antigen presenting cells (APCs). In turn, recruits the Src kinase LCK to the vicinity of the TCR-CD3 complex. A palmitoylation site in the cytoplasmic tail of CD8B chain contributes to partitioning of CD8 into the plasma membrane lipid rafts where signaling proteins are enriched. Once LCK recruited, it initiates different intracellular signaling pathways by phosphorylating various substrates ultimately leading to lymphokine production, motility, adhesion and activation of cytotoxic T-lymphocytes (CTLs). Additionally, plays a critical role in thymic selection of CD8+ T-cells. This chain is T-cell surface glycoprotein CD8 beta chain (CD8B), found in Saimiri sciureus (Common squirrel monkey).